The primary structure comprises 510 residues: Gallate 1-beta-glucosyltransferase (510 aa).

Histidine 19 serves as the catalytic Proton acceptor. Histidine 19 provides a ligand contact to an anthocyanidin. UDP-alpha-D-glucose contacts are provided by glutamine 343, histidine 358, tryptophan 361, asparagine 362, serine 363, and glutamate 366. Position 381 (glycine 381) interacts with an anthocyanidin. UDP-alpha-D-glucose-binding residues include aspartate 382 and glutamine 383.

The protein belongs to the UDP-glycosyltransferase family. Expressed in swelling buds and young leaves.

The catalysed reaction is 3,4,5-trihydroxybenzoate + UDP-alpha-D-glucose = 1-O-galloyl-beta-D-glucose + UDP. It catalyses the reaction vanillate + UDP-alpha-D-glucose = 1-O-(4-hydroxy-3-methoxybenzoyl)-beta-D-glucose + UDP. It carries out the reaction 3,4-dihydroxybenzoate + UDP-alpha-D-glucose = 1-O-(3,4-dihydroxy-benzoyl)-beta-D-glucose + UDP. In terms of biological role, glucosyltransferase that catalyzes the formation of 1-O-beta-D-glucose esters with hydroxybenzoic acids as preferred glucosyl acceptors. Has the highest activity with 3,4-dihydroxybenzoate, vanillate and gallate in vitro. Gallate is the predicted native substrate of the enzyme, which thus catalyzes the formation of 1-O-galloyl-beta-D-glucose, the first committed step of gallotannin biosynthesis. In Quercus robur (English oak), this protein is Gallate 1-beta-glucosyltransferase.